A 66-amino-acid chain; its full sequence is Large ribosomal subunit protein bL35 (66 aa).

Basic residues-rich tracts occupy residues 1 to 16 (MPKQKTHRASAKRFKR) and 31 to 45 (HRFHGKTKKQRRQLR). Residues 1–52 (MPKQKTHRASAKRFKRTGNGGLKRSNAYTSHRFHGKTKKQRRQLRKASMVSA) are disordered.

Belongs to the bacterial ribosomal protein bL35 family.

The chain is Large ribosomal subunit protein bL35 from Ligilactobacillus salivarius (strain UCC118) (Lactobacillus salivarius).